A 1184-amino-acid polypeptide reads, in one-letter code: MVGTMPLCGRRAILEDSKADGTEAQPLVPTGCLMVLLHWPGPEGGEPWVTFSQTSLTAEEVCIHIAHKVGITPPCLNLFALYNAQAKVWLPPNHILDTSQDMNLYFRMRFYFRNWHGMNPQEPAVYRCGFPGAETSSDRAEQGVQLLDSASFEYLFEQGKHEFMNDVVSLRDLSSEEEIHHFKNESLGMAFLHLCHLALSRGVPLEEMAREISFKNCIPHSFRQHIRQHNVLTRLRLHRVFRRFLRAFRPGHLSQQVVMVKYLATLERLAPRFGSERIPVCHLEVLAQPERDPCYIQNSGQTAGDPGPELPSGPPTHEVLVTGTGGIQWHPLQTQESERGNSRGNPHGSRSGKKPKAPKAGEHLTESPQEPPWTYFCDFQDISHVVLKERRVHIHLQDNKCLLLCLCSQAEALSFVALVDGYFRLTADSSHYLCHEVAPPRLVTSIQNGIHGPLMDPFVQAKLWPEDGLYLIQWSTSHLHRLILTVAHRNPAFSNGPRGLRLRKFPITQQPGAFVLDGWGRSFASLGDLRLALQGCSLRAGDDCFPLHHCCLPRPREISNLVIMRGSRAHTRPLNLSQLSFHRVHQDEITQLSHLGQGTRTNVYEGLLRVGGPDEGKVDNGCPPEPGGTSGQQLRVVLKVLDPSHHDIALAFYETASLMSQVSHMHLAFLHGVCVRGSENIIVTEFVEHGPLDVWLRRQRGQVPMTWKMVVAQQLASALSYLEDKNLVHGNVCGRNILLARLGLEEGTNPFIKLSDPGVGQGALSREERVERIPWTAPECLSGGTSSLGTATDMWGFGATLLEICFDGEAPLQGRGPSEKERFYTKKHQLPEPSSPELATLTRQCLTYEPAQRPSFRTILRDLTRLQPQNLVGTSAVNSDSPASDPTVFHKRYLKKIRDLGEGHFGKVSLYCYDPTNDGTGEMVAVKALKEGCGPQLRSGWQREIEILRTLYHEHIVKYKGCCEDQGEKSVQLVMEYVPLGSLRDYLPRHCVGLAQLLLFAQQICEGMAYLHAQHYIHRDLAARNVLLDNDRLVKIGDFGLAKAVPEGHEYYRVREDGDSPVFWYAPECLKECKFYYASDVWSFGVTLYELLTYCDSNQSPHMKFTELIGHTQGQMTVLRLTELLERGERLPRPDRCPCEIYHLMKNCWETEASFRPTFQNLVPILQTAQEKYQGQVPSVFSVC.

The region spanning 33-430 (LMVLLHWPGP…GYFRLTADSS (398 aa)) is the FERM domain. The disordered stretch occupies residues 294 to 368 (CYIQNSGQTA…KAGEHLTESP (75 aa)). Position 295 is a phosphotyrosine (Tyr-295). The SH2; atypical domain occupies 449–529 (GIHGPLMDPF…GRSFASLGDL (81 aa)). Ser-525 is modified (phosphoserine). The Protein kinase 1 domain maps to 589–866 (ITQLSHLGQG…RTILRDLTRL (278 aa)). Phosphotyrosine is present on Tyr-604. Ser-881 bears the Phosphoserine mark. The Protein kinase 2 domain maps to 894-1166 (LKKIRDLGEG…PTFQNLVPIL (273 aa)). ATP-binding positions include 900–908 (LGEGHFGKV) and Lys-927. The active-site Proton acceptor is Asp-1020. A Phosphotyrosine; by autocatalysis modification is found at Tyr-1051. Phosphotyrosine is present on Tyr-1052.

It belongs to the protein kinase superfamily. Tyr protein kinase family. JAK subfamily. As to quaternary structure, interacts (via FERM domain) with JAKMIP1. Interacts with PIK3R1; this interaction is important for cell migration. Interacts with MPL/TPOR. In terms of processing, phosphorylation by JAK1 at Tyr-1051 and Tyr-1052 induces kinase activation.

The enzyme catalyses L-tyrosyl-[protein] + ATP = O-phospho-L-tyrosyl-[protein] + ADP + H(+). The protein kinase 1 domain (also termed pseudokinase domain) mediates autoinhibition of the TYK2 kinase domain. Its function is as follows. Tyrosine kinase of the non-receptor type involved in numerous cytokines and interferons signaling, which regulates cell growth, development, cell migration, innate and adaptive immunity. Plays both structural and catalytic roles in numerous interleukins and interferons (IFN-alpha/beta) signaling. Associates with heterodimeric cytokine receptor complexes and activates STAT family members including STAT1, STAT3, STAT4 or STAT6. The heterodimeric cytokine receptor complexes are composed of (1) a TYK2-associated receptor chain (IFNAR1, IL12RB1, IL10RB or IL13RA1), and (2) a second receptor chain associated either with JAK1 or JAK2. In response to cytokine-binding to receptors, phosphorylates and activates receptors (IFNAR1, IL12RB1, IL10RB or IL13RA1), creating docking sites for STAT members. In turn, recruited STATs are phosphorylated by TYK2 (or JAK1/JAK2 on the second receptor chain), form homo- and heterodimers, translocate to the nucleus, and regulate cytokine/growth factor responsive genes. Negatively regulates STAT3 activity by promototing phosphorylation at a specific tyrosine that differs from the site used for signaling. This is Non-receptor tyrosine-protein kinase TYK2 from Mus musculus (Mouse).